Here is a 328-residue protein sequence, read N- to C-terminus: 6-phosphogluconolactonase (328 aa).

Belongs to the cycloisomerase 2 family.

It carries out the reaction 6-phospho-D-glucono-1,5-lactone + H2O = 6-phospho-D-gluconate + H(+). It functions in the pathway carbohydrate degradation; pentose phosphate pathway; D-ribulose 5-phosphate from D-glucose 6-phosphate (oxidative stage): step 2/3. Functionally, catalyzes the hydrolysis of 6-phosphogluconolactone to 6-phosphogluconate. In Xenorhabdus nematophila (strain ATCC 19061 / DSM 3370 / CCUG 14189 / LMG 1036 / NCIMB 9965 / AN6), this protein is 6-phosphogluconolactonase.